Here is a 76-residue protein sequence, read N- to C-terminus: uncharacterized protein (76 aa).

The segment at 36 to 41 (PDIIIT) is required for interaction with PPP3CA. Residues threonine 44 and threonine 46 each carry the phosphothreonine modification.

Interacts (via PxIxIT motif, when phosphorylated on Thr-44) with PPP3CA. As to expression, not expressed in pancreatic duct cells (at protein level). Abundantly expressed in the pancreas and weakly expressed in the thyroid. Not expressed in pancreatic duct cells (at protein level). Abundantly expressed in the lymph node and weakly expressed in the stomach, trachea and bone marrow.

This is an uncharacterized protein from Homo sapiens (Human).